Consider the following 275-residue polypeptide: Nitrogenase iron protein 1 (275 aa).

Residue 9-16 (GKGGIGKS) participates in ATP binding. Residue C97 coordinates [4Fe-4S] cluster. R100 carries the ADP-ribosylarginine; by dinitrogenase reductase ADP-ribosyltransferase modification. C132 contacts [4Fe-4S] cluster.

It belongs to the NifH/BchL/ChlL family. In terms of assembly, homodimer. It depends on [4Fe-4S] cluster as a cofactor. In terms of processing, the reversible ADP-ribosylation of Arg-100 inactivates the nitrogenase reductase and regulates nitrogenase activity.

It catalyses the reaction N2 + 8 reduced [2Fe-2S]-[ferredoxin] + 16 ATP + 16 H2O = H2 + 8 oxidized [2Fe-2S]-[ferredoxin] + 2 NH4(+) + 16 ADP + 16 phosphate + 6 H(+). The key enzymatic reactions in nitrogen fixation are catalyzed by the nitrogenase complex, which has 2 components: the iron protein and the molybdenum-iron protein. The chain is Nitrogenase iron protein 1 (nifH1) from Methanothermobacter marburgensis (strain ATCC BAA-927 / DSM 2133 / JCM 14651 / NBRC 100331 / OCM 82 / Marburg) (Methanobacterium thermoautotrophicum).